A 254-amino-acid polypeptide reads, in one-letter code: Proteasome activator complex subunit 3 (254 aa).

N-acetylalanine is present on A2. 2 positions are modified to phosphoserine: S17 and S24. K195 is modified (N6-acetyllysine; by P300/CBP). Phosphoserine; by CHEK2 is present on S247.

It belongs to the PA28 family. In terms of assembly, homoheptamer; the stability of the heptamer is essential for the specific activation of the trypsine-like subunit and inhibition of the chymotrypsin-like and postglutamyl-preferring (PGPH) subunits of the proteasome. Interacts with p53/TP53 and MDM2. Interacts with MAP3K3. Associates with the proteasome. Interacts with CCAR2. Interacts with PSME3IP1 (via C-terminus); the interaction is direct and promotes the association of PSME3 with the 20S proteasome. Interacts with COIL; the interaction is inhibited by PSME3IP1. As to quaternary structure, (Microbial infection) Interacts with human cytomegalovirus UL27. Post-translationally, phosphorylated by MAP3K3. Phosphorylation at Ser-247 promotes its association with CCAR2. Acetylation at the major site Lys-195 is important for oligomerization and ability to degrade its target substrates. Deacetylated by SIRT1.

The protein localises to the nucleus. It localises to the cytoplasm. Its function is as follows. Subunit of the 11S REG-gamma (also called PA28-gamma) proteasome regulator, a doughnut-shaped homoheptamer which associates with the proteasome. 11S REG-gamma activates the trypsin-like catalytic subunit of the proteasome but inhibits the chymotrypsin-like and postglutamyl-preferring (PGPH) subunits. Facilitates the MDM2-p53/TP53 interaction which promotes ubiquitination- and MDM2-dependent proteasomal degradation of p53/TP53, limiting its accumulation and resulting in inhibited apoptosis after DNA damage. May also be involved in cell cycle regulation. Mediates CCAR2 and CHEK2-dependent SIRT1 inhibition. In Homo sapiens (Human), this protein is Proteasome activator complex subunit 3 (PSME3).